The sequence spans 254 residues: Uridine-cytidine kinase 1 (254 aa).

Residues methionine 1 to serine 29 form a disordered region. Glycine 30–threonine 38 provides a ligand contact to ATP. Aspartate 87, tyrosine 115, histidine 120, arginine 146, arginine 155, and glutamine 163 together coordinate substrate. ATP is bound at residue aspartate 192. The disordered stretch occupies residues serine 224–histidine 254. A Phosphothreonine modification is found at threonine 228. Residue serine 230 is modified to Phosphoserine. The span at serine 245–histidine 254 shows a compositional bias: basic and acidic residues.

It belongs to the uridine kinase family.

It catalyses the reaction uridine + ATP = UMP + ADP + H(+). It carries out the reaction cytidine + ATP = CMP + ADP + H(+). It participates in pyrimidine metabolism; CTP biosynthesis via salvage pathway; CTP from cytidine: step 1/3. Its pathway is pyrimidine metabolism; UMP biosynthesis via salvage pathway; UMP from uridine: step 1/1. In terms of biological role, phosphorylates uridine and cytidine to uridine monophosphate and cytidine monophosphate. Does not phosphorylate deoxyribonucleosides or purine ribonucleosides. Can use ATP or GTP as a phosphate donor. This Macaca fascicularis (Crab-eating macaque) protein is Uridine-cytidine kinase 1 (UCK1).